Reading from the N-terminus, the 348-residue chain is DnaJ homolog subfamily B member 5 (348 aa).

In terms of domain architecture, J spans 4–68; it reads DYYKILGIPS…KKRSLYDQYG (65 aa).

The protein is DnaJ homolog subfamily B member 5 (Dnajb5) of Mus musculus (Mouse).